The sequence spans 425 residues: Enolase (425 aa).

Q162 provides a ligand contact to (2R)-2-phosphoglycerate. E204 serves as the catalytic Proton donor. Residues D241, E282, and D309 each coordinate Mg(2+). 4 residues coordinate (2R)-2-phosphoglycerate: K334, R363, S364, and K385. Residue K334 is the Proton acceptor of the active site.

The protein belongs to the enolase family. It depends on Mg(2+) as a cofactor.

It localises to the cytoplasm. The protein localises to the secreted. It is found in the cell surface. It catalyses the reaction (2R)-2-phosphoglycerate = phosphoenolpyruvate + H2O. It functions in the pathway carbohydrate degradation; glycolysis; pyruvate from D-glyceraldehyde 3-phosphate: step 4/5. Catalyzes the reversible conversion of 2-phosphoglycerate (2-PG) into phosphoenolpyruvate (PEP). It is essential for the degradation of carbohydrates via glycolysis. The protein is Enolase of Corynebacterium efficiens (strain DSM 44549 / YS-314 / AJ 12310 / JCM 11189 / NBRC 100395).